Consider the following 270-residue polypeptide: 3-phenylpropionate-dihydrodiol/cinnamic acid-dihydrodiol dehydrogenase (270 aa).

10 to 34 serves as a coordination point for NAD(+); the sequence is FITGGGSGLGLALVERFIEEGAQVA. Substrate is bound at residue serine 143. Tyrosine 156 (proton acceptor) is an active-site residue.

Belongs to the short-chain dehydrogenases/reductases (SDR) family.

It carries out the reaction 3-(cis-5,6-dihydroxycyclohexa-1,3-dien-1-yl)propanoate + NAD(+) = 3-(2,3-dihydroxyphenyl)propanoate + NADH + H(+). It catalyses the reaction (2E)-3-(cis-5,6-dihydroxycyclohexa-1,3-dien-1-yl)prop-2-enoate + NAD(+) = (2E)-3-(2,3-dihydroxyphenyl)prop-2-enoate + NADH + H(+). The protein operates within aromatic compound metabolism; 3-phenylpropanoate degradation. Functionally, converts 3-phenylpropionate-dihydrodiol (PP-dihydrodiol) and cinnamic acid-dihydrodiol (CI-dihydrodiol) into 3-(2,3-dihydroxylphenyl)propanoic acid (DHPP) and 2,3-dihydroxicinnamic acid (DHCI), respectively. The chain is 3-phenylpropionate-dihydrodiol/cinnamic acid-dihydrodiol dehydrogenase from Escherichia coli (strain K12 / MC4100 / BW2952).